We begin with the raw amino-acid sequence, 88 residues long: Small ribosomal subunit protein uS15 (88 aa).

It belongs to the universal ribosomal protein uS15 family. As to quaternary structure, part of the 30S ribosomal subunit. Forms a bridge to the 50S subunit in the 70S ribosome, contacting the 23S rRNA.

Its function is as follows. One of the primary rRNA binding proteins, it binds directly to 16S rRNA where it helps nucleate assembly of the platform of the 30S subunit by binding and bridging several RNA helices of the 16S rRNA. Forms an intersubunit bridge (bridge B4) with the 23S rRNA of the 50S subunit in the ribosome. This is Small ribosomal subunit protein uS15 from Hydrogenovibrio crunogenus (strain DSM 25203 / XCL-2) (Thiomicrospira crunogena).